Consider the following 657-residue polypeptide: UvrABC system protein B (657 aa).

The Helicase ATP-binding domain occupies 25 to 182; it reads NSIKSNNRAQ…KKLIEIQYER (158 aa). 38-45 serves as a coordination point for ATP; that stretch reads GVTGSGKT. A Beta-hairpin motif is present at residues 91–114; that stretch reads YYDYYQPEAYVPQTDTFIEKDASI. One can recognise a Helicase C-terminal domain in the interval 429–595; sequence QIDDLYGEIN…TIIKDVRDII (167 aa). One can recognise a UVR domain in the interval 621–656; the sequence is DKLIKDLTEEMLLAAKNLQFERAAELRDIINEIKDG.

It belongs to the UvrB family. In terms of assembly, forms a heterotetramer with UvrA during the search for lesions. Interacts with UvrC in an incision complex.

The protein localises to the cytoplasm. Functionally, the UvrABC repair system catalyzes the recognition and processing of DNA lesions. A damage recognition complex composed of 2 UvrA and 2 UvrB subunits scans DNA for abnormalities. Upon binding of the UvrA(2)B(2) complex to a putative damaged site, the DNA wraps around one UvrB monomer. DNA wrap is dependent on ATP binding by UvrB and probably causes local melting of the DNA helix, facilitating insertion of UvrB beta-hairpin between the DNA strands. Then UvrB probes one DNA strand for the presence of a lesion. If a lesion is found the UvrA subunits dissociate and the UvrB-DNA preincision complex is formed. This complex is subsequently bound by UvrC and the second UvrB is released. If no lesion is found, the DNA wraps around the other UvrB subunit that will check the other stand for damage. The chain is UvrABC system protein B from Clostridium beijerinckii (strain ATCC 51743 / NCIMB 8052) (Clostridium acetobutylicum).